A 162-amino-acid polypeptide reads, in one-letter code: Urease accessory protein UreE 1 (162 aa).

Residues 143–162 form a disordered region; sequence SGGHQHHHGHDHDHHHPDHE. Basic and acidic residues predominate over residues 152–162; sequence HDHDHHHPDHE.

Belongs to the UreE family.

The protein resides in the cytoplasm. Involved in urease metallocenter assembly. Binds nickel. Probably functions as a nickel donor during metallocenter assembly. The chain is Urease accessory protein UreE 1 from Brucella suis biovar 1 (strain 1330).